Consider the following 159-residue polypeptide: Cytochrome b6-f complex subunit 4 (159 aa).

3 helical membrane-spanning segments follow: residues 36–56 (LLYI…GLAV), 95–115 (LLGV…PFLE), and 131–151 (TVFL…TLPI).

It belongs to the cytochrome b family. PetD subfamily. The 4 large subunits of the cytochrome b6-f complex are cytochrome b6, subunit IV (17 kDa polypeptide, petD), cytochrome f and the Rieske protein, while the 4 small subunits are petG, petL, petM and petN. The complex functions as a dimer.

Its subcellular location is the plastid. It is found in the chloroplast thylakoid membrane. In terms of biological role, component of the cytochrome b6-f complex, which mediates electron transfer between photosystem II (PSII) and photosystem I (PSI), cyclic electron flow around PSI, and state transitions. This chain is Cytochrome b6-f complex subunit 4, found in Piper cenocladum (Ant piper).